We begin with the raw amino-acid sequence, 394 residues long: Elongation factor Tu (394 aa).

Positions 10–204 constitute a tr-type G domain; the sequence is KPHVNIGTIG…AVDSYIPQPV (195 aa). Residues 19–26 are G1; it reads GHVDHGKT. 19–26 provides a ligand contact to GTP; the sequence is GHVDHGKT. T26 contacts Mg(2+). The segment at 60–64 is G2; it reads GITIS. The tract at residues 81–84 is G3; it reads DCPG. GTP contacts are provided by residues 81 to 85 and 136 to 139; these read DCPGH and NKVD. The G4 stretch occupies residues 136 to 139; that stretch reads NKVD. Residues 174 to 176 form a G5 region; it reads SAL.

Belongs to the TRAFAC class translation factor GTPase superfamily. Classic translation factor GTPase family. EF-Tu/EF-1A subfamily. As to quaternary structure, monomer.

It is found in the cytoplasm. It carries out the reaction GTP + H2O = GDP + phosphate + H(+). GTP hydrolase that promotes the GTP-dependent binding of aminoacyl-tRNA to the A-site of ribosomes during protein biosynthesis. This Rickettsia parkeri protein is Elongation factor Tu.